Here is a 185-residue protein sequence, read N- to C-terminus: Ribosome maturation factor RimM (185 aa).

A PRC barrel domain is found at 106–185; the sequence is SGEYYWKDLL…IIEVDWDPGF (80 aa).

Belongs to the RimM family. Binds ribosomal protein uS19.

It localises to the cytoplasm. Functionally, an accessory protein needed during the final step in the assembly of 30S ribosomal subunit, possibly for assembly of the head region. Essential for efficient processing of 16S rRNA. May be needed both before and after RbfA during the maturation of 16S rRNA. It has affinity for free ribosomal 30S subunits but not for 70S ribosomes. The protein is Ribosome maturation factor RimM of Sodalis glossinidius (strain morsitans).